A 165-amino-acid chain; its full sequence is Small ribosomal subunit protein uS13 (165 aa).

Residues 139 to 165 are disordered; that stretch reads GMTIGVARKKAAQPQSQQSSSQQQKSS. Low complexity predominate over residues 153-165; it reads QSQQSSSQQQKSS.

The protein belongs to the universal ribosomal protein uS13 family. Part of the 30S ribosomal subunit. Forms a loose heterodimer with protein S19. Forms two bridges to the 50S subunit in the 70S ribosome.

Functionally, located at the top of the head of the 30S subunit, it contacts several helices of the 16S rRNA. In the 70S ribosome it contacts the 23S rRNA (bridge B1a) and protein L5 of the 50S subunit (bridge B1b), connecting the 2 subunits; these bridges are implicated in subunit movement. This Saccharolobus solfataricus (strain ATCC 35092 / DSM 1617 / JCM 11322 / P2) (Sulfolobus solfataricus) protein is Small ribosomal subunit protein uS13.